The chain runs to 1559 residues: Chromatin-remodeling ATPase INO80 (1559 aa).

An assembles INO80 complex module with putative regulatory components INO80E, INO80F, UCHL5, NFRKB, MCRS1 and IN80D region spans residues 1-268 (MASELGAGDD…DAPPPGTKKK (268 aa)). A disordered region spans residues 46–88 (ISSDDSEDGLDDNNPLLPESGDPLIQVKEEPPNSLLGETSGAS). Lys-118 is modified (N6-acetyllysine). The segment at 213 to 250 (KFKEDKKLKAKLKKVKKKRRRDEEFSSEESPRHHHHQT) is disordered. The tract at residues 214 to 528 (FKEDKKLKAK…KLKGYQLKGM (315 aa)) is assembles INO80 complex module consisting of conserved components ACTR8, ACTL6A and YY1. A compositionally biased stretch (basic residues) spans 220–232 (LKAKLKKVKKKRR). In terms of domain architecture, DBINO spans 282–407 (VWLSIVKKEL…AHFMSRKRDM (126 aa)). The segment at 523–1559 (YQLKGMNWLA…GKGTNPSGGR (1037 aa)) is assembles INO80 complex module consisting of conserved components INO80B, INO80C, ACTR5, RVBL1, RVBL2. Residues 532-703 (ANLYEQGING…WALLHFIMPT (172 aa)) enclose the Helicase ATP-binding domain. An ATP-binding site is contributed by 545-552 (DEMGLGKT). A Helicase C-terminal domain is found at 1108 to 1263 (ALDVLLTRLK…GGNFKPDTLK (156 aa)). Composition is skewed to basic and acidic residues over residues 1285–1297 (QEEKRQQEESNRV) and 1306–1319 (KYAEKKKKEDELDG). Disordered regions lie at residues 1285–1319 (QEEKRQQEESNRVKERKRKREKYAEKKKKEDELDG), 1391–1464 (ASSA…AAMA), and 1504–1559 (GLAD…SGGR). A compositionally biased stretch (polar residues) spans 1393-1418 (SAPQSRATNSPASITGSVSDTVNGIS). Positions 1510-1521 (PSSASSPLSSPL) are enriched in low complexity. A Phosphoserine modification is found at Ser-1515.

The protein belongs to the SNF2/RAD54 helicase family. As to quaternary structure, component of the chromatin remodeling INO80 complex; three different complex modules assemble on different domains of INO80. Interacts with DDB1. Interacts with transcriptional repressor protein YY1; the interaction recruits the INO80 complex to YY1 target genes. Interacts with YY1AP1. Interacts with tubulin alpha. In terms of tissue distribution, widely expressed.

The protein localises to the cytoplasm. Its subcellular location is the nucleus. It localises to the cytoskeleton. It is found in the spindle. The protein resides in the chromosome. The catalysed reaction is ATP + H2O = ADP + phosphate + H(+). Its activity is regulated as follows. Activated upon binding to double stranded DNA or nucleosomes. ATPase component of the chromatin remodeling INO80 complex which is involved in transcriptional regulation, DNA replication and DNA repair. Binds DNA. As part of the INO80 complex, remodels chromatin by shifting nucleosomes. Regulates transcription upon recruitment by YY1 to YY1-activated genes, where it acts as an essential coactivator. Involved in UV-damage excision DNA repair. The contribution to DNA double-strand break repair appears to be largely indirect through transcriptional regulation. Involved in DNA replication. Required for microtubule assembly during mitosis thereby regulating chromosome segregation cycle. This is Chromatin-remodeling ATPase INO80 (Ino80) from Mus musculus (Mouse).